We begin with the raw amino-acid sequence, 543 residues long: Sensor histidine kinase DcuS (543 aa).

Residues 1-20 (MRHSLPYRMLRKRPMKLSTT) lie on the Cytoplasmic side of the membrane. The helical transmembrane segment at 21-41 (VILMVSAVLFSVLLVVHLIYF) threads the bilayer. Over 42 to 181 (SQISDMTRDG…VTQQINDSRW (140 aa)) the chain is Periplasmic. Residues 107-110 (RYSH), Lys-121, 140-142 (GFL), and Arg-147 contribute to the (R)-malate site. Residues 182-202 (SIIWSVLFGMLVGLIGTCILV) form a helical membrane-spanning segment. Over 203-543 (KVLKKILFGL…IPWDGERSNR (341 aa)) the chain is Cytoplasmic. The PAS domain occupies 212–323 (LEPYEISTLF…IIGAISTFRD (112 aa)). In terms of domain architecture, Histidine kinase spans 346 to 538 (ERSHEFMNKL…QFFVQIPWDG (193 aa)). At His-349 the chain carries Phosphohistidine; by autocatalysis.

As to quaternary structure, homodimer. Post-translationally, autophosphorylated. The phosphoryl group is rapidly transferred to DcuR.

It is found in the cell inner membrane. The enzyme catalyses ATP + protein L-histidine = ADP + protein N-phospho-L-histidine.. Functionally, member of the two-component regulatory system DcuR/DcuS. Involved in the C4-dicarboxylate-stimulated regulation of the genes encoding the anaerobic fumarate respiratory system (frdABCD; nuoAN; dcuB; sdhCDAB; etc.). Weakly regulates the aerobic C4-dicarboxylate transporter dctA. Activates DcuR by phosphorylation. The polypeptide is Sensor histidine kinase DcuS (dcuS) (Escherichia coli O157:H7).